The following is a 269-amino-acid chain: MTELDTIANPSDPAVQRIIDVTKPSRSNIKTTLIEDVEPLMHSIAAGVEFIEVYGSDSSPFPSELLDLCGRQNIPVRLIDSSIVNQLFKGERKAKTFGIARVPRPARFGDIASRRGDVVVLDGVKIVGNIGAIVRTSLALGASGIILVDSDITSIADRRLQRASRGYVFSLPVVLSGREEAIAFIRDSGMQLMTLKADGDISVKELGDNPDRLALLFGSEKGGPSDLFEEASSASVSIPMMSQTESLNVSVSLGIALHERIDRNLAANR.

Positions 135, 165, 195, 218, 238, and 247 each coordinate S-adenosyl-L-methionine.

It belongs to the class IV-like SAM-binding methyltransferase superfamily. RNA methyltransferase TsnR/AvirB family. In terms of assembly, homodimer.

It carries out the reaction adenosine(1067) in 23S rRNA + S-adenosyl-L-methionine = 2'-O-methyladenosine(1067) in 23S rRNA + S-adenosyl-L-homocysteine + H(+). Functionally, specifically methylates the adenosine-1067 in 23S ribosomal RNA. Confers resistance to antibiotic thiostrepton. This Streptomyces azureus protein is 23S rRNA (adenosine(1067)-2'-O)-methyltransferase (tsnR).